A 408-amino-acid chain; its full sequence is MASAAVASMVLDPKASPALMDLSTADEEDLYGRLKSLERQLEFTDIQEEYVKDEQKNLKRELLRAQEEVKRIQSVPLVIGQFMEMVDQNNGIVGSTTGSNYYVRILSTINRELLKPSASVALHRHSNALVDVLPPEADSSISLLSQSEKPDVSYNDIGGCDIQKQEIREAVELPLTHHELYKQIGIDPPRGVLLYGPPGTGKTMLAKAVANHTTAAFIRVVGSEFVQKYLGEGPRMVRDVFRLAKENAPAIIFIDEVDAIATARFDAQTGADREVQRILMELLNQMDGFDQTVNVKVIMATNRADTLDPALLRPGRLDRKIEFPLPDRRQKRLVFQVCTSKMNLSDEVDLEDYVSRPDKISAAEIAAICQEAGMHAVRKNRYVILPKDFEKGYRANVKKPDTDFEFYK.

An N-acetylalanine modification is found at A2. S16 is modified (phosphoserine). The stretch at 28–75 forms a coiled coil; that stretch reads EDLYGRLKSLERQLEFTDIQEEYVKDEQKNLKRELLRAQEEVKRIQSV. 196 to 203 is a binding site for ATP; sequence GPPGTGKT.

It belongs to the AAA ATPase family. As to quaternary structure, component of the 19S regulatory particle (RP/PA700) base subcomplex of the 26S proteasome. The 26S proteasome is composed of a core protease (CP), known as the 20S proteasome, capped at one or both ends by the 19S regulatory particle (RP/PA700). The RP/PA700 complex is composed of at least 17 different subunits in two subcomplexes, the base and the lid, which form the portions proximal and distal to the 20S proteolytic core, respectively. In terms of tissue distribution, expressed in dark-grown etiolated seedlings, roots, leaves, stems and flowers.

Its subcellular location is the cytoplasm. The protein localises to the nucleus. Functionally, the 26S proteasome is involved in the ATP-dependent degradation of ubiquitinated proteins. The regulatory (or ATPase) complex confers ATP dependency and substrate specificity to the 26S complex. This is 26S proteasome regulatory subunit 6B homolog (RPT3) from Arabidopsis thaliana (Mouse-ear cress).